We begin with the raw amino-acid sequence, 305 residues long: Aquaporin NIP6-1 (305 aa).

The tract at residues 1–30 (MDHEEIPSTPSTPATTPGTPGAPLFGGFEG) is disordered. The segment covering 7-23 (PSTPSTPATTPGTPGAP) has biased composition (low complexity). The next 2 membrane-spanning stretches (helical) occupy residues 82–102 (LGAE…TAIV) and 111–131 (TLIG…LSTG). The NPA 1 motif lies at 139-141 (NPA). The next 3 helical transmembrane spans lie at 159 to 179 (VYIG…KAVF), 194 to 214 (LSQA…VVTA), and 221 to 241 (AVGE…ILIA). The NPA 2 motif lies at 250–252 (NPV). Residues 267–287 (IWVYLTAPILGALIGAGTYTI) form a helical membrane-spanning segment. Phosphoserine is present on Ser302.

This sequence belongs to the MIP/aquaporin (TC 1.A.8) family. NIP (TC 1.A.8.12) subfamily. In terms of tissue distribution, expressed in roots.

The protein resides in the membrane. Its function is as follows. Transports glycerol, urea and formamide, in Xenopus laevis oocytes. Very low water transport activity. In Arabidopsis thaliana (Mouse-ear cress), this protein is Aquaporin NIP6-1 (NIP6-1).